The chain runs to 387 residues: Phosphoglycerate kinase (387 aa).

Substrate-binding positions include 21-23, arginine 36, 59-62, arginine 113, and arginine 146; these read DLN and HLGR. ATP is bound by residues lysine 197, glutamate 314, and 340-343; that span reads GGDT.

This sequence belongs to the phosphoglycerate kinase family. Monomer.

The protein resides in the cytoplasm. It catalyses the reaction (2R)-3-phosphoglycerate + ATP = (2R)-3-phospho-glyceroyl phosphate + ADP. Its pathway is carbohydrate degradation; glycolysis; pyruvate from D-glyceraldehyde 3-phosphate: step 2/5. This is Phosphoglycerate kinase from Pseudomonas putida (strain GB-1).